A 116-amino-acid chain; its full sequence is Large ribosomal subunit protein uL18 (116 aa).

It belongs to the universal ribosomal protein uL18 family. As to quaternary structure, part of the 50S ribosomal subunit; part of the 5S rRNA/L5/L18/L25 subcomplex. Contacts the 5S and 23S rRNAs.

This is one of the proteins that bind and probably mediate the attachment of the 5S RNA into the large ribosomal subunit, where it forms part of the central protuberance. The chain is Large ribosomal subunit protein uL18 from Acinetobacter baumannii (strain AB307-0294).